The primary structure comprises 821 residues: LPS-assembly protein LptD (821 aa).

The N-terminal stretch at 1–20 is a signal peptide; that stretch reads MGKRLFWTALSGLMVSAAHA.

The protein belongs to the LptD family. As to quaternary structure, component of the lipopolysaccharide transport and assembly complex. Interacts with LptE and LptA.

The protein localises to the cell outer membrane. Functionally, together with LptE, is involved in the assembly of lipopolysaccharide (LPS) at the surface of the outer membrane. The chain is LPS-assembly protein LptD from Chromohalobacter salexigens (strain ATCC BAA-138 / DSM 3043 / CIP 106854 / NCIMB 13768 / 1H11).